The following is a 143-amino-acid chain: Large ribosomal subunit protein uL11 (143 aa).

This sequence belongs to the universal ribosomal protein uL11 family. As to quaternary structure, part of the ribosomal stalk of the 50S ribosomal subunit. Interacts with L10 and the large rRNA to form the base of the stalk. L10 forms an elongated spine to which L12 dimers bind in a sequential fashion forming a multimeric L10(L12)X complex. One or more lysine residues are methylated.

In terms of biological role, forms part of the ribosomal stalk which helps the ribosome interact with GTP-bound translation factors. The chain is Large ribosomal subunit protein uL11 from Cupriavidus pinatubonensis (strain JMP 134 / LMG 1197) (Cupriavidus necator (strain JMP 134)).